Here is a 179-residue protein sequence, read N- to C-terminus: Large ribosomal subunit protein uL6 (179 aa).

It belongs to the universal ribosomal protein uL6 family. Part of the 50S ribosomal subunit.

In terms of biological role, this protein binds to the 23S rRNA, and is important in its secondary structure. It is located near the subunit interface in the base of the L7/L12 stalk, and near the tRNA binding site of the peptidyltransferase center. The polypeptide is Large ribosomal subunit protein uL6 (Synechocystis sp. (strain ATCC 27184 / PCC 6803 / Kazusa)).